We begin with the raw amino-acid sequence, 263 residues long: Diphthine synthase (263 aa).

Residues Leu11, Asp89, Ala92, 117-118 (SV), Leu166, and Leu208 contribute to the S-adenosyl-L-methionine site.

The protein belongs to the diphthine synthase family. As to quaternary structure, homodimer.

It catalyses the reaction 2-[(3S)-amino-3-carboxypropyl]-L-histidyl-[translation elongation factor 2] + 3 S-adenosyl-L-methionine = diphthine-[translation elongation factor 2] + 3 S-adenosyl-L-homocysteine + 3 H(+). Its pathway is protein modification; peptidyl-diphthamide biosynthesis. In terms of biological role, S-adenosyl-L-methionine-dependent methyltransferase that catalyzes the trimethylation of the amino group of the modified target histidine residue in translation elongation factor 2 (EF-2), to form an intermediate called diphthine. The three successive methylation reactions represent the second step of diphthamide biosynthesis. The sequence is that of Diphthine synthase from Methanopyrus kandleri (strain AV19 / DSM 6324 / JCM 9639 / NBRC 100938).